Consider the following 331-residue polypeptide: Cysteine and histidine-rich domain-containing protein 1 (331 aa).

Positions 5, 10, 24, 27, 42, 43, 59, 64, 157, 162, 176, 179, 194, 195, 211, and 216 each coordinate Zn(2+). CHORD domains lie at 5–64 and 157–216; these read CYNR…KGLH and CKNA…TGTH. The CS domain maps to 227 to 316; sequence VVPCRHDWHQ…AEPLLWASLE (90 aa).

Functionally, regulates centrosome duplication. This is Cysteine and histidine-rich domain-containing protein 1 (CHORDC1) from Gallus gallus (Chicken).